The primary structure comprises 351 residues: Tropomodulin-2 (351 aa).

At S25 the chain carries Phosphoserine.

It belongs to the tropomodulin family. As to quaternary structure, binds to the N-terminus of tropomyosin and to actin. Neuronal-tissue specific.

The protein localises to the cytoplasm. Its subcellular location is the cytoskeleton. Its function is as follows. Blocks the elongation and depolymerization of the actin filaments at the pointed end. The Tmod/TM complex contributes to the formation of the short actin protofilament, which in turn defines the geometry of the membrane skeleton. The protein is Tropomodulin-2 (Tmod2) of Mus musculus (Mouse).